A 461-amino-acid chain; its full sequence is Photosystem II CP43 reaction center protein (461 aa).

The propeptide occupies 1 to 2; it reads ME. Threonine 3 carries the N-acetylthreonine modification. Phosphothreonine is present on threonine 3. 5 helical membrane passes run 57-81, 122-143, 166-188, 243-263, and 279-300; these read LFEV…PHLA, LIGP…KDKN, KALY…RIIT, QPWA…LSYS, and WFNN…ASQS. Glutamate 355 provides a ligand contact to [CaMn4O5] cluster. Residues 435-459 traverse the membrane as a helical segment; it reads RARAAAAGFEKGIDRFNEPTLSLRP.

This sequence belongs to the PsbB/PsbC family. PsbC subfamily. PSII is composed of 1 copy each of membrane proteins PsbA, PsbB, PsbC, PsbD, PsbE, PsbF, PsbH, PsbI, PsbJ, PsbK, PsbL, PsbM, PsbT, PsbX, PsbY, PsbZ, Psb30/Ycf12, at least 3 peripheral proteins of the oxygen-evolving complex and a large number of cofactors. It forms dimeric complexes. The cofactor is Binds multiple chlorophylls and provides some of the ligands for the Ca-4Mn-5O cluster of the oxygen-evolving complex. It may also provide a ligand for a Cl- that is required for oxygen evolution. PSII binds additional chlorophylls, carotenoids and specific lipids..

It is found in the plastid. It localises to the chloroplast thylakoid membrane. Its function is as follows. One of the components of the core complex of photosystem II (PSII). It binds chlorophyll and helps catalyze the primary light-induced photochemical processes of PSII. PSII is a light-driven water:plastoquinone oxidoreductase, using light energy to abstract electrons from H(2)O, generating O(2) and a proton gradient subsequently used for ATP formation. The polypeptide is Photosystem II CP43 reaction center protein (Oedogonium cardiacum (Filamentous green alga)).